The chain runs to 423 residues: Glutamyl-tRNA reductase (423 aa).

Substrate is bound by residues 51–54 (TCNR), Ser-99, 104–106 (EDQ), and Gln-110. Cys-52 functions as the Nucleophile in the catalytic mechanism. An NADP(+)-binding site is contributed by 179 to 184 (GSGEMG).

It belongs to the glutamyl-tRNA reductase family. Homodimer.

It carries out the reaction (S)-4-amino-5-oxopentanoate + tRNA(Glu) + NADP(+) = L-glutamyl-tRNA(Glu) + NADPH + H(+). The protein operates within porphyrin-containing compound metabolism; protoporphyrin-IX biosynthesis; 5-aminolevulinate from L-glutamyl-tRNA(Glu): step 1/2. Functionally, catalyzes the NADPH-dependent reduction of glutamyl-tRNA(Glu) to glutamate 1-semialdehyde (GSA). The polypeptide is Glutamyl-tRNA reductase (Methanoculleus marisnigri (strain ATCC 35101 / DSM 1498 / JR1)).